The following is a 118-amino-acid chain: Basic phospholipase A2 acanthin-2 (118 aa).

Disulfide bonds link C11/C71, C27/C117, C29/C45, C44/C98, C51/C91, C60/C84, and C78/C89. Residues Y28, G30, and G32 each coordinate Ca(2+). The active site involves H48. A Ca(2+)-binding site is contributed by D49. The active site involves D92.

Ca(2+) serves as cofactor. As to expression, expressed by the venom gland.

It is found in the secreted. It catalyses the reaction a 1,2-diacyl-sn-glycero-3-phosphocholine + H2O = a 1-acyl-sn-glycero-3-phosphocholine + a fatty acid + H(+). Its function is as follows. Snake venom phospholipase A2 (PLA2) that potently inhibits ADP-(IC(50)=12 nM) and collagen-induced (IC(50)=4 nM) platelet aggregation when tested on human whole blood. PLA2 catalyzes the calcium-dependent hydrolysis of the 2-acyl groups in 3-sn-phosphoglycerides. The protein is Basic phospholipase A2 acanthin-2 of Acanthophis antarcticus (Common death adder).